A 153-amino-acid chain; its full sequence is Membrane protein FAM174B (153 aa).

A signal peptide spans 1 to 27 (MSALPPQPPPPLLLLLLALLAAPAALA). Residues 28–84 (RRAESASASQPEAEHQPPPGPGNATQLGSGMAGGGSSNSSVDAVVTRISSLLRDLPT) lie on the Extracellular side of the membrane. The disordered stretch occupies residues 31 to 67 (ESASASQPEAEHQPPPGPGNATQLGSGMAGGGSSNSS). Asn-50 carries N-linked (GlcNAc...) asparagine glycosylation. Residues 85–105 (LKATVIVACAFSALLIACLLL) form a helical membrane-spanning segment. Residues 106 to 153 (RVFRLGKRLKKTRKYDIITTPAERVEMAPLNEEDDEDEDSTVFDIKYR) lie on the Cytoplasmic side of the membrane.

This sequence belongs to the FAM174 family.

It localises to the cell membrane. It is found in the golgi apparatus. Its function is as follows. Essential for Golgi structural integrity. This Mus musculus (Mouse) protein is Membrane protein FAM174B (Fam174b).